Consider the following 275-residue polypeptide: ATP synthase subunit delta (275 aa).

The protein belongs to the ATPase delta chain family. In terms of assembly, F-type ATPases have 2 components, F(1) - the catalytic core - and F(0) - the membrane proton channel. F(1) has five subunits: alpha(3), beta(3), gamma(1), delta(1), epsilon(1). F(0) has three main subunits: a(1), b(2) and c(10-14). The alpha and beta chains form an alternating ring which encloses part of the gamma chain. F(1) is attached to F(0) by a central stalk formed by the gamma and epsilon chains, while a peripheral stalk is formed by the delta and b chains.

It is found in the cell membrane. Its function is as follows. F(1)F(0) ATP synthase produces ATP from ADP in the presence of a proton or sodium gradient. F-type ATPases consist of two structural domains, F(1) containing the extramembraneous catalytic core and F(0) containing the membrane proton channel, linked together by a central stalk and a peripheral stalk. During catalysis, ATP synthesis in the catalytic domain of F(1) is coupled via a rotary mechanism of the central stalk subunits to proton translocation. Functionally, this protein is part of the stalk that links CF(0) to CF(1). It either transmits conformational changes from CF(0) to CF(1) or is implicated in proton conduction. This chain is ATP synthase subunit delta, found in Pseudarthrobacter chlorophenolicus (strain ATCC 700700 / DSM 12829 / CIP 107037 / JCM 12360 / KCTC 9906 / NCIMB 13794 / A6) (Arthrobacter chlorophenolicus).